The chain runs to 637 residues: ATP-dependent zinc metalloprotease FtsH (637 aa).

Residues 1–6 (MNNQGR) lie on the Cytoplasmic side of the membrane. Residues 7-27 (SILAWATLFIFVILLFNVFQS) form a helical membrane-spanning segment. Residues 28–103 (DSLLGGRNNI…VVPLETRMNT (76 aa)) lie on the Periplasmic side of the membrane. A helical transmembrane segment spans residues 104–124 (FLGFLISWFPMLLLIGVWVFF). Residues 125 to 637 (MRQMHGGGKA…TKAKKENYAS (513 aa)) are Cytoplasmic-facing. Residue 195 to 202 (GPPGTGKT) coordinates ATP. H417 is a binding site for Zn(2+). E418 is a catalytic residue. Zn(2+)-binding residues include H421 and D495. Residues 603–637 (ENKFPFNDSSTIKIDKEKSPEKTKTTKAKKENYAS) form a disordered region. The span at 615–637 (KIDKEKSPEKTKTTKAKKENYAS) shows a compositional bias: basic and acidic residues.

In the central section; belongs to the AAA ATPase family. This sequence in the C-terminal section; belongs to the peptidase M41 family. Homohexamer. Requires Zn(2+) as cofactor.

The protein localises to the cell inner membrane. Acts as a processive, ATP-dependent zinc metallopeptidase for both cytoplasmic and membrane proteins. Plays a role in the quality control of integral membrane proteins. The sequence is that of ATP-dependent zinc metalloprotease FtsH from Rickettsia conorii (strain ATCC VR-613 / Malish 7).